Reading from the N-terminus, the 405-residue chain is 8-amino-7-oxononanoate synthase 2 (405 aa).

Arg20 contributes to the substrate binding site. Gly116 to Tyr117 provides a ligand contact to pyridoxal 5'-phosphate. A substrate-binding site is contributed by His141. 3 residues coordinate pyridoxal 5'-phosphate: Ser187, His215, and Thr243. Residue Lys246 is modified to N6-(pyridoxal phosphate)lysine. Thr369 serves as a coordination point for substrate.

This sequence belongs to the class-II pyridoxal-phosphate-dependent aminotransferase family. BioF subfamily. Homodimer. Requires pyridoxal 5'-phosphate as cofactor.

The catalysed reaction is 6-carboxyhexanoyl-[ACP] + L-alanine + H(+) = (8S)-8-amino-7-oxononanoate + holo-[ACP] + CO2. The protein operates within cofactor biosynthesis; biotin biosynthesis. In terms of biological role, catalyzes the decarboxylative condensation of pimeloyl-[acyl-carrier protein] and L-alanine to produce 8-amino-7-oxononanoate (AON), [acyl-carrier protein], and carbon dioxide. This is 8-amino-7-oxononanoate synthase 2 from Polaromonas sp. (strain JS666 / ATCC BAA-500).